Reading from the N-terminus, the 154-residue chain is SsrA-binding protein (154 aa).

Belongs to the SmpB family.

It is found in the cytoplasm. Its function is as follows. Required for rescue of stalled ribosomes mediated by trans-translation. Binds to transfer-messenger RNA (tmRNA), required for stable association of tmRNA with ribosomes. tmRNA and SmpB together mimic tRNA shape, replacing the anticodon stem-loop with SmpB. tmRNA is encoded by the ssrA gene; the 2 termini fold to resemble tRNA(Ala) and it encodes a 'tag peptide', a short internal open reading frame. During trans-translation Ala-aminoacylated tmRNA acts like a tRNA, entering the A-site of stalled ribosomes, displacing the stalled mRNA. The ribosome then switches to translate the ORF on the tmRNA; the nascent peptide is terminated with the 'tag peptide' encoded by the tmRNA and targeted for degradation. The ribosome is freed to recommence translation, which seems to be the essential function of trans-translation. This is SsrA-binding protein from Gluconacetobacter diazotrophicus (strain ATCC 49037 / DSM 5601 / CCUG 37298 / CIP 103539 / LMG 7603 / PAl5).